The chain runs to 447 residues: BAG family molecular chaperone regulator 5 (447 aa).

BAG domains follow at residues 9–86 (SISR…EQNA), 95–167 (QNIF…ENCM), 182–260 (SVAK…DLEE), 275–350 (SILK…DLKE), and 365–442 (SHKA…DLKS).

Binds to the ATPase domain of HSP/HSP70 chaperones. Binds PRKN. Interacts complex with HSPA8 and JPH2.

In terms of biological role, co-chaperone for HSP/HSP70 proteins. It functions as a nucleotide-exchange factor promoting the release of ADP from HSP70, thereby activating Hsp70-mediated protein refolding. Has an essential role in maintaining proteostasis at junctional membrane complexes (JMC), where it may function as a scaffold between the HSPA8 chaperone and JMC proteins enabling correct, HSPA8-dependent JMC protein folding. Inhibits both auto-ubiquitination of PRKN and ubiquitination of target proteins by PRKN. This chain is BAG family molecular chaperone regulator 5 (BAG5), found in Bos taurus (Bovine).